The sequence spans 223 residues: ATP synthase subunit a 1 (223 aa).

A run of 5 helical transmembrane segments spans residues 20–40 (QTIV…AFLT), 78–98 (YLSY…FTII), 107–127 (SLST…LYGI), 173–193 (VMII…LMSV), and 194–214 (LGLL…TVYI).

It belongs to the ATPase A chain family. F-type ATPases have 2 components, CF(1) - the catalytic core - and CF(0) - the membrane proton channel. CF(1) has five subunits: alpha(3), beta(3), gamma(1), delta(1), epsilon(1). CF(0) has four main subunits: a, b, b' and c.

The protein localises to the cell inner membrane. In terms of biological role, key component of the proton channel; it plays a direct role in the translocation of protons across the membrane. This Prosthecochloris aestuarii (strain DSM 271 / SK 413) protein is ATP synthase subunit a 1.